A 732-amino-acid polypeptide reads, in one-letter code: MKKTIFQQLFLSVCALTVALPCSAQSPETSGKEFTLEQLMPGGKEFYNFYPEYVVGLQWMGDNYVFIEGDDLVFNKANGKSAQTTRFSAADLNALMPEGCKFQTTDAFPSFRTLDAGRGLVVLFTQGGLVGFDMLARKVTYLFDTNEETASLDFSPVGDRVAYVRNHNLYIARGGKLGEGMSRAIAVTIDGTETLVYGQAVHQREFGIEKGTFWSPKGSCLAFYRMDQSMVKPTPIVDYHPLEAESKPLYYPMAGTPSHHVTVGIYHLATGKTVYLQTGEPKEKFLTNLSWSPDENILYVAEVNRAQNECKVNAYDAETGRFVRTLFVETDKHYVEPLHPLTFLPGSNNQFIWQSRRDGWNHLYLYDTTGRLIRQVTKGEWEVTNFAGFDPKGTRLYFESTEASPLERHFYCIDIKGGKTKDLTPESGMHRTQLSPDGSAIIDIFQSPTVPRKVTVTNIGKGSHTLLEAKNPDTGYAMPEIRTGTIMAADGQTPLYYKLTMPLHFDPAKKYPVIVYVYGGPHAQLVTKTWRSSVGGWDIYMAQKGYAVFTVDSRGSANRGAAFEQVIHRRLGQTEMADQMCGVDFLKSQSWVDADRIGVHGWSYGGFMTTNLMLTHGDVFKVGVAGGPVIDWNRYEIMYGERYFDAPQENPEGYDAANLLKRAGDLKGRLMLIHGAIDPVVVWQHSLLFLDACVKARTYPDYYVYPSHEHNVMGPDRVHLYETITRYFTDHL.

The N-terminal stretch at 1–24 (MKKTIFQQLFLSVCALTVALPCSA) is a signal peptide. Catalysis depends on charge relay system residues Ser-603, Asp-678, and His-710.

Belongs to the peptidase S9B family. Post-translationally, the N-terminus is blocked.

It carries out the reaction Hydrolysis of Xaa-Xaa-Pro-|-Yaa- releasing the N-terminal tripeptide of a peptide with Pro as the third residue (position P1) and where Yaa is not proline.. Strongly inhibited by diisopropyl fluorophosphate and Pefabloc. Weakly inhibited by 3,4-dichloroisocumarin. Not inhibited by phenylmethylsulfonyl fluoride, leupeptin, antipain or prolinal. Activated by iodoacetamide. Its function is as follows. Serine proteinase. Releases tripeptides from the free amino terminus of proteins. Has a requirement for Pro in the P1 position, but is inactivated by Pro in the P1' position. In Porphyromonas gingivalis (strain ATCC BAA-308 / W83), this protein is Prolyl tripeptidyl peptidase.